A 158-amino-acid polypeptide reads, in one-letter code: C-type lectin lectoxin-Enh7 (158 aa).

The N-terminal stretch at 1 to 23 (MGQFTVVSLGLLAVFLSLSGAKG) is a signal peptide. 3 cysteine pairs are disulfide-bonded: cysteine 26–cysteine 37, cysteine 54–cysteine 154, and cysteine 129–cysteine 146. The 123-residue stretch at 33–155 (RNGVCNKLFP…CASLHPFICQ (123 aa)) folds into the C-type lectin domain. The Mannose-binding motif lies at 119–121 (EPN). Ca(2+) contacts are provided by glutamate 127, asparagine 142, and aspartate 143.

Belongs to the true venom lectin family. Expressed by the venom gland.

Its subcellular location is the secreted. In terms of biological role, mannose-binding lectin which recognizes specific carbohydrate structures and agglutinates a variety of animal cells by binding to cell-surface glycoproteins and glycolipids. May be a calcium-dependent lectin. The polypeptide is C-type lectin lectoxin-Enh7 (Pseudoferania polylepis (Macleay's water snake)).